The primary structure comprises 77 residues: Sec-independent protein translocase protein TatA (77 aa).

Residues M1–G21 form a helical membrane-spanning segment. The segment covering G42–E60 has biased composition (basic and acidic residues). The segment at G42–V77 is disordered.

Belongs to the TatA/E family. The Tat system comprises two distinct complexes: a TatABC complex, containing multiple copies of TatA, TatB and TatC subunits, and a separate TatA complex, containing only TatA subunits. Substrates initially bind to the TatABC complex, which probably triggers association of the separate TatA complex to form the active translocon.

The protein localises to the cell inner membrane. Its function is as follows. Part of the twin-arginine translocation (Tat) system that transports large folded proteins containing a characteristic twin-arginine motif in their signal peptide across membranes. TatA could form the protein-conducting channel of the Tat system. The sequence is that of Sec-independent protein translocase protein TatA from Bradyrhizobium diazoefficiens (strain JCM 10833 / BCRC 13528 / IAM 13628 / NBRC 14792 / USDA 110).